The primary structure comprises 281 residues: Cardosin-F (281 aa).

A Peptidase A1 domain is found at 18 to 278; sequence YYGEIGIGTP…DYGNLLVGFA (261 aa). D36 is an active-site residue. A disulfide bridge connects residues C181 and C185. Residue D190 is part of the active site. Residue N213 is glycosylated (N-linked (GlcNAc...) asparagine).

This sequence belongs to the peptidase A1 family. In terms of assembly, heterodimer of a light chain and a heavy chain. An intermediate form is produced first, and undergoes proteolytic processing to remove the internal plant-specific insert (PSI) and the propeptide. N-glycosylated. Pistils.

The protein resides in the microsome membrane. It is found in the protein storage vacuole. Its subcellular location is the secreted. The protein localises to the cell wall. It localises to the extracellular space. The protein resides in the extracellular matrix. Inhibited by pepstatin. Its function is as follows. Aspartic protease with a high preference for bonds between hydrophobic residues. The polypeptide is Cardosin-F (Cynara cardunculus (Cardoon)).